The primary structure comprises 287 residues: ATP synthase subunit a (287 aa).

6 consecutive transmembrane segments (helical) span residues 37–57 (LDSV…MWLA), 96–116 (FIAP…AMDL), 149–169 (LGLS…IKGL), 187–207 (PVFA…EYVA), 224–244 (ELVF…LSGV), and 266–286 (TLQA…AHEA).

Belongs to the ATPase A chain family. As to quaternary structure, F-type ATPases have 2 components, CF(1) - the catalytic core - and CF(0) - the membrane proton channel. CF(1) has five subunits: alpha(3), beta(3), gamma(1), delta(1), epsilon(1). CF(0) has three main subunits: a(1), b(2) and c(9-12). The alpha and beta chains form an alternating ring which encloses part of the gamma chain. CF(1) is attached to CF(0) by a central stalk formed by the gamma and epsilon chains, while a peripheral stalk is formed by the delta and b chains.

Its subcellular location is the cell inner membrane. In terms of biological role, key component of the proton channel; it plays a direct role in the translocation of protons across the membrane. This is ATP synthase subunit a from Acidovorax sp. (strain JS42).